The chain runs to 207 residues: 5-nitrosalicylic acid 1,2-dioxygenase (207 aa).

The Cupin type-2 domain occupies 85–151 (QLIHPGEEVT…GDKDTLMYVI (67 aa)).

The catalysed reaction is 5-nitrosalicylate + O2 = 2-oxo-3-(5-oxofuran-2-ylidene)propanoate + nitrite + H(+). Functionally, dioxygenase that catalyzes the cleavage of the aromatic ring of 5-nitrosalicylate (5NSA) without prior removal of the nitro group in biodegradation of 5-nitroanthranilate. This Bradyrhizobium sp protein is 5-nitrosalicylic acid 1,2-dioxygenase (naaB).